The sequence spans 290 residues: Pirin (290 aa).

Fe cation-binding residues include His56, His58, His101, and Glu103.

The protein belongs to the pirin family. In terms of assembly, may interact with NF1/CTF1. Interacts with BCL3. Identified in a complex comprised of PIR, BLC3, NFKB1 and target DNA. It depends on Fe cation as a cofactor. As to expression, highly expressed in a subset of melanomas. Detected at very low levels in most tissues (at protein level). Expressed in all tissues, with highest level of expression in heart and liver.

Its subcellular location is the nucleus. The protein localises to the cytoplasm. It catalyses the reaction quercetin + O2 = 2-(3,4-dihydroxybenzoyloxy)-4,6-dihydroxybenzoate + CO. It functions in the pathway flavonoid metabolism; quercetin degradation. Inhibited by kojic acid, sodium diethyldithiocarbamate and 1,10-phenanthroline monohydrochloride. Its function is as follows. Transcriptional coregulator of NF-kappa-B which facilitates binding of NF-kappa-B proteins to target kappa-B genes in a redox-state-dependent manner. May be required for efficient terminal myeloid maturation of hematopoietic cells. Has quercetin 2,3-dioxygenase activity (in vitro). The protein is Pirin (PIR) of Homo sapiens (Human).